We begin with the raw amino-acid sequence, 187 residues long: Peptidyl-tRNA hydrolase (187 aa).

Tyrosine 14 contacts tRNA. Histidine 19 (proton acceptor) is an active-site residue. Residues phenylalanine 60 and asparagine 62 each coordinate tRNA.

This sequence belongs to the PTH family. In terms of assembly, monomer.

The protein localises to the cytoplasm. It catalyses the reaction an N-acyl-L-alpha-aminoacyl-tRNA + H2O = an N-acyl-L-amino acid + a tRNA + H(+). Its function is as follows. Hydrolyzes ribosome-free peptidyl-tRNAs (with 1 or more amino acids incorporated), which drop off the ribosome during protein synthesis, or as a result of ribosome stalling. Functionally, catalyzes the release of premature peptidyl moieties from peptidyl-tRNA molecules trapped in stalled 50S ribosomal subunits, and thus maintains levels of free tRNAs and 50S ribosomes. The chain is Peptidyl-tRNA hydrolase from Pseudothermotoga lettingae (strain ATCC BAA-301 / DSM 14385 / NBRC 107922 / TMO) (Thermotoga lettingae).